A 151-amino-acid chain; its full sequence is Acidic phospholipase A2 1 (151 aa).

Positions 1-27 (MYPAHLLVLLAVCVSLLGAASIPARPL) are cleaved as a signal peptide. 7 disulfides stabilise this stretch: Cys38–Cys104, Cys54–Cys151, Cys56–Cys72, Cys71–Cys132, Cys78–Cys125, Cys88–Cys118, and Cys111–Cys123. Ca(2+) is bound by residues Tyr55, Gly57, and Gly59. His75 is an active-site residue. Asp76 contacts Ca(2+). Asp126 is a catalytic residue.

This sequence belongs to the phospholipase A2 family. Group I subfamily. D49 sub-subfamily. Requires Ca(2+) as cofactor. Expressed by the venom gland.

It localises to the secreted. It catalyses the reaction a 1,2-diacyl-sn-glycero-3-phosphocholine + H2O = a 1-acyl-sn-glycero-3-phosphocholine + a fatty acid + H(+). PLA2 catalyzes the calcium-dependent hydrolysis of the 2-acyl groups in 3-sn-phosphoglycerides. This Tropidechis carinatus (Australian rough-scaled snake) protein is Acidic phospholipase A2 1.